A 760-amino-acid chain; its full sequence is 5-methyltetrahydropteroyltriglutamate--homocysteine methyltransferase (760 aa).

5-methyltetrahydropteroyltri-L-glutamate contacts are provided by residues 15 to 18 and Lys-114; that span reads RELK. Residues 436–438 and Glu-489 each bind L-homocysteine; that span reads IGS. L-methionine contacts are provided by residues 436–438 and Glu-489; that span reads IGS. Residues 520–521 and Trp-566 each bind 5-methyltetrahydropteroyltri-L-glutamate; that span reads RC. Asp-604 contacts L-homocysteine. Asp-604 is a binding site for L-methionine. Glu-610 is a binding site for 5-methyltetrahydropteroyltri-L-glutamate. His-646, Cys-648, and Glu-670 together coordinate Zn(2+). His-699 acts as the Proton donor in catalysis. Cys-731 provides a ligand contact to Zn(2+).

The protein belongs to the vitamin-B12 independent methionine synthase family. Requires Zn(2+) as cofactor.

The enzyme catalyses 5-methyltetrahydropteroyltri-L-glutamate + L-homocysteine = tetrahydropteroyltri-L-glutamate + L-methionine. It participates in amino-acid biosynthesis; L-methionine biosynthesis via de novo pathway; L-methionine from L-homocysteine (MetE route): step 1/1. Catalyzes the transfer of a methyl group from 5-methyltetrahydrofolate to homocysteine resulting in methionine formation. This Shewanella oneidensis (strain ATCC 700550 / JCM 31522 / CIP 106686 / LMG 19005 / NCIMB 14063 / MR-1) protein is 5-methyltetrahydropteroyltriglutamate--homocysteine methyltransferase.